Reading from the N-terminus, the 124-residue chain is Small ribosomal subunit protein uS12cz/uS12cy (124 aa).

The protein belongs to the universal ribosomal protein uS12 family. In terms of assembly, part of the 30S ribosomal subunit.

The protein resides in the plastid. In terms of biological role, with S4 and S5 plays an important role in translational accuracy. Located at the interface of the 30S and 50S subunits. The chain is Small ribosomal subunit protein uS12cz/uS12cy (rps12-A) from Epifagus virginiana (Beechdrops).